Here is a 246-residue protein sequence, read N- to C-terminus: Large ribosomal subunit protein uL3 (246 aa).

2 disordered regions span residues 140–162 and 215–246; these read SHRS…NKKM and DVPL…EENA. Glutamine 151 bears the N5-methylglutamine mark. Residues 234-246 show a composition bias toward low complexity; it reads EAAPEAPASEENA.

It belongs to the universal ribosomal protein uL3 family. As to quaternary structure, part of the 50S ribosomal subunit. Forms a cluster with proteins L14 and L19. Methylated by PrmB.

One of the primary rRNA binding proteins, it binds directly near the 3'-end of the 23S rRNA, where it nucleates assembly of the 50S subunit. The protein is Large ribosomal subunit protein uL3 of Methylorubrum populi (strain ATCC BAA-705 / NCIMB 13946 / BJ001) (Methylobacterium populi).